Here is a 358-residue protein sequence, read N- to C-terminus: Uroporphyrinogen decarboxylase (358 aa).

Substrate contacts are provided by residues Arg-36–Arg-40, Asp-85, Tyr-160, Ser-215, and His-338.

This sequence belongs to the uroporphyrinogen decarboxylase family. As to quaternary structure, homodimer.

It is found in the cytoplasm. It catalyses the reaction uroporphyrinogen III + 4 H(+) = coproporphyrinogen III + 4 CO2. It participates in porphyrin-containing compound metabolism; protoporphyrin-IX biosynthesis; coproporphyrinogen-III from 5-aminolevulinate: step 4/4. Functionally, catalyzes the decarboxylation of four acetate groups of uroporphyrinogen-III to yield coproporphyrinogen-III. This Corynebacterium glutamicum (strain ATCC 13032 / DSM 20300 / JCM 1318 / BCRC 11384 / CCUG 27702 / LMG 3730 / NBRC 12168 / NCIMB 10025 / NRRL B-2784 / 534) protein is Uroporphyrinogen decarboxylase.